A 466-amino-acid polypeptide reads, in one-letter code: Transcription factor SOX-10 (466 aa).

5 disordered regions span residues 1–67 (MAEE…DDDK), 160–200 (LRMQ…QGGA), 213–275 (DHRH…DFGN), 344–375 (TVSPPGVDAKAQVKTETTGPQGPPHYTDQPST), and 433–466 (RPLYTAISDPSPSGPQSHSPTHWEQPVYTTLSRP). The segment covering 23-32 (LSPGSAPSLG) has biased composition (low complexity). Phosphoserine is present on serine 24. Positions 62 to 102 (EADDDKFPVCIREAVSQVLSGYDWTLVPMPVRVNGASKSKP) are dimerization (DIM). A DNA-binding region (HMG box) is located at residues 104 to 172 (VKRPMNAFMV…QHKKDHPDYK (69 aa)). Basic and acidic residues predominate over residues 160–173 (LRMQHKKDHPDYKY). The segment covering 183 to 200 (AAQGEAECPGGEAEQGGA) has biased composition (low complexity). The segment at 228 to 310 (PEHPSGQSHG…LPPNGHPGHV (83 aa)) is transactivation domain (TAM). Positions 254–271 (ADPKRDGRSLGEGGKPHI) are enriched in basic and acidic residues. Residues 353 to 466 (KAQVKTETTG…QPVYTTLSRP (114 aa)) form a transactivation domain (TAC) region. Residues 440 to 466 (SDPSPSGPQSHSPTHWEQPVYTTLSRP) show a composition bias toward polar residues.

In terms of assembly, monomer. Interacts with Armcx3 at the mitochondrial outer membrane surface. Interacts with PAX3. As to expression, expressed in oligodendroglia of the spinal tube (at protein level).

It is found in the cytoplasm. Its subcellular location is the nucleus. It localises to the mitochondrion outer membrane. Its function is as follows. Transcription factor that plays a central role in developing and mature glia. Specifically activates expression of myelin genes, during oligodendrocyte (OL) maturation, such as DUSP15 and MYRF, thereby playing a central role in oligodendrocyte maturation and CNS myelination. Once induced, MYRF cooperates with SOX10 to implement the myelination program. Transcriptional activator of MITF, acting synergistically with PAX3. Transcriptional activator of MBP, via binding to the gene promoter. The protein is Transcription factor SOX-10 (Sox10) of Mus musculus (Mouse).